The primary structure comprises 432 residues: Serine hydroxymethyltransferase (432 aa).

(6S)-5,6,7,8-tetrahydrofolate contacts are provided by residues leucine 131 and 135–137 (GHL). N6-(pyridoxal phosphate)lysine is present on lysine 240.

Belongs to the SHMT family. As to quaternary structure, homodimer. It depends on pyridoxal 5'-phosphate as a cofactor.

Its subcellular location is the cytoplasm. It carries out the reaction (6R)-5,10-methylene-5,6,7,8-tetrahydrofolate + glycine + H2O = (6S)-5,6,7,8-tetrahydrofolate + L-serine. It participates in one-carbon metabolism; tetrahydrofolate interconversion. It functions in the pathway amino-acid biosynthesis; glycine biosynthesis; glycine from L-serine: step 1/1. In terms of biological role, catalyzes the reversible interconversion of serine and glycine with tetrahydrofolate (THF) serving as the one-carbon carrier. This reaction serves as the major source of one-carbon groups required for the biosynthesis of purines, thymidylate, methionine, and other important biomolecules. Also exhibits THF-independent aldolase activity toward beta-hydroxyamino acids, producing glycine and aldehydes, via a retro-aldol mechanism. The polypeptide is Serine hydroxymethyltransferase (Bradyrhizobium diazoefficiens (strain JCM 10833 / BCRC 13528 / IAM 13628 / NBRC 14792 / USDA 110)).